The chain runs to 140 residues: Blasticidin-S deaminase (140 aa).

One can recognise a CMP/dCMP-type deaminase domain in the interval 8 to 140; it reads QQDLELVEVA…ELIPLKYTRN (133 aa). A Zn(2+)-binding site is contributed by cysteine 59. Residue glutamate 61 is the Proton donor of the active site. 2 residues coordinate Zn(2+): cysteine 100 and cysteine 103.

It belongs to the cytidine and deoxycytidylate deaminase family. The cofactor is Zn(2+).

It carries out the reaction blasticidin S + H2O + H(+) = deaminohydroxyblasticidin S + NH4(+). Functionally, catalyzes the deamination of the cytosine moiety of the antibiotics blasticidin S, cytomycin and acetylblasticidin S. The sequence is that of Blasticidin-S deaminase (bsr) from Bacillus cereus.